We begin with the raw amino-acid sequence, 1111 residues long: MIRKLMKIPPFFTALFASAMFTLSVSQGVLAANSTNVLPTEQSLKADLANAQKMSEGEAKNRLLAELQTSIDLLQQIQAQQKINDALQTTLSHSESEIRKNNAEIQALKKQQETATSTDDNAQSQDYLQNSLTKLNDQLQDTQNALSTANAQLAGQSSISERAQAALTENVVRTQQINQQLANNDIGSTLRKQYQIDLQLIDLKNSYNQNLLKNNDQLSLLYQSRYNLLNLRLQVQQQNIIAIQEVINQKNLQQSQNQVEQAQQQQKTVQNDYIQKELDRNAQLGQYLLQQTEKANSLTQDELRMRNILDSLTQTQRTIDEQISALQGTLVLSRIIQQQKQKLPTNLNIQGLSKQIADLRVHIFDITQKRNELYDLDNYINKVESEDGKQFTEAERTQVKTLLTERRKMTSDLIKSLNNQLNLAISLELTQLQITQISDQIQSKLEQQSFWVKSNNPINLDWVKMLPRALIEQFNGMLKKLGFPTNYDNLPYLLMYFLGLFIVGGAIFKFKNRIKQQLNKINREIHRLDTDSQWSTPLALLLTAFLTLSSTLWFLAVCQMIGFFFFKNPEEFWHWSFSMAGYWWFFTFWISLFRPNGIFVNHFESSKENAQRFRGVIQRIIVVVVLLLNTSVFSNVTDAGLANDVLGQINTIAALIFCAAIIAPRFNRVLRSYEPETNKHHWLIRIVQIGFRLIPVGLIVLIVLGYYYTALNLIEHFIHSYIAWCVWWLVRNTIYRGITVSSRRLAHRRLAEKRRQKALENNYENISSDDVVAVGEPEESLALNDVRSQLLRFVDLFIWTALLGIFYYVWSDLVTVVSYLREITLWQQTTTTDAGTVMESITLFNLLVALVIVGITYVLVRNISGILEVLIFSRVNLSQGTPYTITTLLTYIFIAIGGAWAFATLGMSWSKLQWLFAALSVGLGFGMQEIFANFVSGIILLFERPIRVGDVVTINEVSGTVAKIRIRAITLIDFDRKEVIVPNKSFVTGQVTNWALSNTMTRLVISVGVAYGSDLTLVRQLLLQAADEQPTILRDPKPSAYFLTFGASTLDHELRVYVEQVGDRTSTTDALNRRINELFAEHNIDIAFNQLDVFIKNNDTGEEIPFVDVKK.

Positions 1-31 (MIRKLMKIPPFFTALFASAMFTLSVSQGVLA) are cleaved as a signal peptide. A run of 11 helical transmembrane segments spans residues 490–510 (LPYL…IFKF), 538–558 (LALL…LAVC), 572–592 (FWHW…WISL), 620–640 (IIVV…TDAG), 644–664 (DVLG…IIAP), 694–714 (IPVG…LNLI), 797–817 (FIWT…VTVV), 840–860 (SITL…YVLV), 885–905 (ITTL…FATL), 922–942 (GLGF…ILLF), and 1003–1023 (LVIS…QLLL).

Belongs to the MscS (TC 1.A.23) family.

It localises to the cell membrane. This is an uncharacterized protein from Haemophilus influenzae (strain ATCC 51907 / DSM 11121 / KW20 / Rd).